Here is a 551-residue protein sequence, read N- to C-terminus: Transcription factor 7-like 1-B (551 aa).

Residues 1-11 (MPQLNGGGGDE) show a composition bias toward gly residues. 3 disordered regions span residues 1–76 (MPQL…DLES), 298–326 (QEPNGELSPPVNTKSPGPNKKDEDKKPHI), and 392–525 (GWSA…PPSP). Positions 19-32 (ISFKDEGEQEDKIS) are enriched in basic and acidic residues. The segment covering 46–61 (SSLVSESENNSSSSDS) has biased composition (low complexity). Over residues 63 to 76 (QTERRPQPRADLES) the composition is skewed to basic and acidic residues. Residues 326-394 (IKKPLNAFML…LHSQLYPGWS (69 aa)) constitute a DNA-binding region (HMG box). Over residues 449-468 (SPATPSAALASPAAPAATHS) the composition is skewed to low complexity. The segment covering 469–478 (EQAQPLSLTT) has biased composition (polar residues). A compositionally biased stretch (low complexity) spans 493-505 (SSSSSSSSSSSGL).

The protein belongs to the TCF/LEF family. As to quaternary structure, interacts with ctnnb1.

The protein resides in the nucleus. Its function is as follows. Participates in the Wnt signaling pathway. Probably binds to DNA and acts as a repressor in the absence of ctnnb1, and possibly as an activator in its presence. Regulates anterior-posterior patterning in the neuroectoderm by repressing posterior neural fates. Also required for hindbrain morphogenesis. This is Transcription factor 7-like 1-B (tcf7l1b) from Danio rerio (Zebrafish).